The following is a 243-amino-acid chain: MKIDILTLFPEMFAPLEHSIVGKAKEKGLLDIHYHNFRDHAEKARHVDDEPYGGGQGMLLRAQPIFDTMDSIQATKPRVILLDPAGKPFHQSYAEELALEEELIFICGHYEGYDERIKTLVTDEISLGDFVLTGGELAAMTMIDATVRLIPNVLGKQASHQEDSFSSGLLEYPQYTRPYDYRGMKVPDVLMSGHHEHIRLWRMEQSLKKTYLRRPDLLETYDFSDEEKRIFDKIKSGLSEGEN.

S-adenosyl-L-methionine contacts are provided by residues Gly-108 and 127-132 (LGDFVL).

It belongs to the RNA methyltransferase TrmD family. In terms of assembly, homodimer.

It is found in the cytoplasm. The catalysed reaction is guanosine(37) in tRNA + S-adenosyl-L-methionine = N(1)-methylguanosine(37) in tRNA + S-adenosyl-L-homocysteine + H(+). Its function is as follows. Specifically methylates guanosine-37 in various tRNAs. This Streptococcus equi subsp. equi (strain 4047) protein is tRNA (guanine-N(1)-)-methyltransferase.